The sequence spans 260 residues: Phosphatidylglycerol--prolipoprotein diacylglyceryl transferase (260 aa).

Helical transmembrane passes span 17–37 (VVKW…SWIF), 52–72 (LTAA…LHVI), 85–105 (IFSG…IGLW), and 113–133 (FNLG…QAIG). Arg134 is a binding site for a 1,2-diacyl-sn-glycero-3-phospho-(1'-sn-glycerol). A run of 3 helical transmembrane segments spans residues 170 to 190 (APTQ…SLFI), 198 to 218 (GQLF…IGFV), and 227 to 247 (GLEQ…PLFI).

It belongs to the Lgt family.

It localises to the cell membrane. The enzyme catalyses L-cysteinyl-[prolipoprotein] + a 1,2-diacyl-sn-glycero-3-phospho-(1'-sn-glycerol) = an S-1,2-diacyl-sn-glyceryl-L-cysteinyl-[prolipoprotein] + sn-glycerol 1-phosphate + H(+). It functions in the pathway protein modification; lipoprotein biosynthesis (diacylglyceryl transfer). Functionally, catalyzes the transfer of the diacylglyceryl group from phosphatidylglycerol to the sulfhydryl group of the N-terminal cysteine of a prolipoprotein, the first step in the formation of mature lipoproteins. This is Phosphatidylglycerol--prolipoprotein diacylglyceryl transferase from Dehalococcoides mccartyi (strain ATCC BAA-2100 / JCM 16839 / KCTC 5957 / BAV1).